The following is a 464-amino-acid chain: Chaperone SurA (464 aa).

The first 25 residues, 1 to 25 (MTRYFSIVLSLLLAVSCVFLPVASA), serve as a signal peptide directing secretion. PpiC domains follow at residues 175–277 (GAQY…KLVE) and 292–391 (ATEY…QRLG). Residues 439–464 (PADDHQTPSAAVIPATGAVLPSATKH) are disordered.

It localises to the periplasm. The enzyme catalyses [protein]-peptidylproline (omega=180) = [protein]-peptidylproline (omega=0). Chaperone involved in the correct folding and assembly of outer membrane proteins. Recognizes specific patterns of aromatic residues and the orientation of their side chains, which are found more frequently in integral outer membrane proteins. May act in both early periplasmic and late outer membrane-associated steps of protein maturation. This chain is Chaperone SurA, found in Xylella fastidiosa (strain 9a5c).